A 65-amino-acid polypeptide reads, in one-letter code: Photosystem II reaction center protein J (65 aa).

The segment covering 1–17 (MSTKLKGPDGRIPDRLP) has biased composition (basic and acidic residues). Positions 1-20 (MSTKLKGPDGRIPDRLPDGT) are disordered. A helical transmembrane segment spans residues 36–56 (LWLVATVGGMAVLSVLGLFFF).

Belongs to the PsbJ family. PSII is composed of 1 copy each of membrane proteins PsbA, PsbB, PsbC, PsbD, PsbE, PsbF, PsbH, PsbI, PsbJ, PsbK, PsbL, PsbM, PsbT, PsbX, PsbY, Psb30/Ycf12, peripheral proteins PsbO, CyanoQ (PsbQ), PsbU, PsbV and a large number of cofactors. It forms dimeric complexes.

It is found in the cellular thylakoid membrane. One of the components of the core complex of photosystem II (PSII). PSII is a light-driven water:plastoquinone oxidoreductase that uses light energy to abstract electrons from H(2)O, generating O(2) and a proton gradient subsequently used for ATP formation. It consists of a core antenna complex that captures photons, and an electron transfer chain that converts photonic excitation into a charge separation. This chain is Photosystem II reaction center protein J, found in Prochlorococcus marinus (strain MIT 9303).